A 96-amino-acid polypeptide reads, in one-letter code: Large ribosomal subunit protein bL21 (96 aa).

The protein belongs to the bacterial ribosomal protein bL21 family. As to quaternary structure, part of the 50S ribosomal subunit. Contacts protein L20.

This protein binds to 23S rRNA in the presence of protein L20. The polypeptide is Large ribosomal subunit protein bL21 (Chlorobium phaeobacteroides (strain BS1)).